Here is a 252-residue protein sequence, read N- to C-terminus: Phosphoribosylformylglycinamidine synthase subunit PurQ (252 aa).

Positions 6–237 (VGVVVFPGSN…FAHLAGTKRS (232 aa)) constitute a Glutamine amidotransferase type-1 domain. C89 (nucleophile) is an active-site residue. Catalysis depends on residues H206 and E208.

Part of the FGAM synthase complex composed of 1 PurL, 1 PurQ and 2 PurS subunits.

The protein localises to the cytoplasm. The catalysed reaction is N(2)-formyl-N(1)-(5-phospho-beta-D-ribosyl)glycinamide + L-glutamine + ATP + H2O = 2-formamido-N(1)-(5-O-phospho-beta-D-ribosyl)acetamidine + L-glutamate + ADP + phosphate + H(+). It catalyses the reaction L-glutamine + H2O = L-glutamate + NH4(+). It participates in purine metabolism; IMP biosynthesis via de novo pathway; 5-amino-1-(5-phospho-D-ribosyl)imidazole from N(2)-formyl-N(1)-(5-phospho-D-ribosyl)glycinamide: step 1/2. Its function is as follows. Part of the phosphoribosylformylglycinamidine synthase complex involved in the purines biosynthetic pathway. Catalyzes the ATP-dependent conversion of formylglycinamide ribonucleotide (FGAR) and glutamine to yield formylglycinamidine ribonucleotide (FGAM) and glutamate. The FGAM synthase complex is composed of three subunits. PurQ produces an ammonia molecule by converting glutamine to glutamate. PurL transfers the ammonia molecule to FGAR to form FGAM in an ATP-dependent manner. PurS interacts with PurQ and PurL and is thought to assist in the transfer of the ammonia molecule from PurQ to PurL. This chain is Phosphoribosylformylglycinamidine synthase subunit PurQ, found in Chlorobaculum parvum (strain DSM 263 / NCIMB 8327) (Chlorobium vibrioforme subsp. thiosulfatophilum).